The primary structure comprises 101 residues: Urease subunit beta (101 aa).

The protein belongs to the urease beta subunit family. In terms of assembly, heterotrimer of UreA (gamma), UreB (beta) and UreC (alpha) subunits. Three heterotrimers associate to form the active enzyme.

The protein resides in the cytoplasm. The catalysed reaction is urea + 2 H2O + H(+) = hydrogencarbonate + 2 NH4(+). Its pathway is nitrogen metabolism; urea degradation; CO(2) and NH(3) from urea (urease route): step 1/1. The protein is Urease subunit beta of Chelativorans sp. (strain BNC1).